A 607-amino-acid polypeptide reads, in one-letter code: UvrABC system protein C (607 aa).

A GIY-YIG domain is found at 16–94 (HLPGVYRHLD…IKSLRPRYNI (79 aa)). The region spanning 203–238 (REVMDEIEARMQQASGELRFEEAAVLRDQMGSLSKV) is the UVR domain.

This sequence belongs to the UvrC family. Interacts with UvrB in an incision complex.

It localises to the cytoplasm. In terms of biological role, the UvrABC repair system catalyzes the recognition and processing of DNA lesions. UvrC both incises the 5' and 3' sides of the lesion. The N-terminal half is responsible for the 3' incision and the C-terminal half is responsible for the 5' incision. The polypeptide is UvrABC system protein C (Bordetella avium (strain 197N)).